The following is a 37-amino-acid chain: MKVKSSVRKICENCKVIRRSGKVIVICSNPKHKQRQG.

The protein belongs to the bacterial ribosomal protein bL36 family.

It localises to the plastid. The protein localises to the chloroplast. This is Large ribosomal subunit protein bL36c from Bigelowiella natans (Pedinomonas minutissima).